Reading from the N-terminus, the 676-residue chain is tRNA uridine 5-carboxymethylaminomethyl modification enzyme MnmG (676 aa).

15 to 20 (GAGHAG) contacts FAD. 316–330 (GPRYCPSIEDKIVRF) contributes to the NAD(+) binding site.

It belongs to the MnmG family. Homodimer. Heterotetramer of two MnmE and two MnmG subunits. The cofactor is FAD.

The protein resides in the cytoplasm. In terms of biological role, NAD-binding protein involved in the addition of a carboxymethylaminomethyl (cmnm) group at the wobble position (U34) of certain tRNAs, forming tRNA-cmnm(5)s(2)U34. This Roseiflexus castenholzii (strain DSM 13941 / HLO8) protein is tRNA uridine 5-carboxymethylaminomethyl modification enzyme MnmG.